Reading from the N-terminus, the 82-residue chain is Transcription elongation factor 1 homolog (82 aa).

Positions 26, 29, 50, and 53 each coordinate Zn(2+).

This sequence belongs to the ELOF1 family.

Its subcellular location is the nucleus. Transcription elongation factor implicated in the maintenance of proper chromatin structure in actively transcribed regions. This Drosophila melanogaster (Fruit fly) protein is Transcription elongation factor 1 homolog.